We begin with the raw amino-acid sequence, 239 residues long: MARNSEKAQSMLFRFREAQAADLGIIDAGRTRRPRSITEQDSIPACEKWRGQVLKEISRKVSRIQDPALSDYQIRDLNDEINKLMREKHMWEVQIRNLGGPNYMRSGGKVYDEAGREIPGGGRGYKYFGRARELPGVKELFEAAARAKQDDEKPLETRDDLRKQVDAAYYGYAPDEEDEKLLAYEAARERQAFENLAKAAAGLEPPPGWEPLPEWELPTMDEVAQELIDRRRRRLLDQL.

Belongs to the ISY1 family. As to quaternary structure, associated with the spliceosome.

Its subcellular location is the cytoplasm. It is found in the nucleus. In terms of biological role, involved in pre-mRNA splicing. This chain is Pre-mRNA-splicing factor isy1 (msp-7), found in Neurospora crassa (strain ATCC 24698 / 74-OR23-1A / CBS 708.71 / DSM 1257 / FGSC 987).